Here is a 182-residue protein sequence, read N- to C-terminus: Putative manganese efflux pump MntP (182 aa).

Helical transmembrane passes span 6 to 26 (LIPL…VSLG), 37 to 57 (ILYI…IGMV), 71 to 91 (HFAG…SSIL), 101 to 121 (IGIS…SVGL), 131 to 151 (IITI…GLLI), and 162 to 182 (YGEI…LFPI).

Belongs to the MntP (TC 9.B.29) family.

It localises to the cell membrane. In terms of biological role, probably functions as a manganese efflux pump. This is Putative manganese efflux pump MntP from Bacillus anthracis (strain A0248).